Reading from the N-terminus, the 549-residue chain is Mitogen-activated protein kinase 15 (549 aa).

A ubiquitin-conjugating region spans residues M1 to L20. The Protein kinase domain occupies Y14–V305. ATP-binding positions include L20–V28 and K43. The active-site Proton acceptor is the D138. T176 carries the phosphothreonine modification. The short motif at T176 to Y178 is the TXY element. Y178 carries the post-translational modification Phosphotyrosine. The tract at residues L266 to L286 is necessary to interact with ESRRA, to regulate its subcellular localization and to inhibit its transcriptional activity. Residues Q301–V382 form a requires for interaction with GABARAP, MAP1LC3B AND GABARAPL1 region. The tract at residues A370–F507 is disordered. PXXXP motif repeat units lie at residues S380–P384 and P387–P391. PXXXP motif; regulates binding with chromatin and interaction with PCNA repeat units follow at residues R395–P399 and P403–P407. Over residues P403 to S416 the composition is skewed to basic and acidic residues. R451 carries the post-translational modification Omega-N-methylarginine. Polar residues predominate over residues S456–N467. The segment covering A483 to R492 has biased composition (low complexity). Residues L493–P502 are compositionally biased toward basic and acidic residues.

The protein belongs to the protein kinase superfamily. CMGC Ser/Thr protein kinase family. MAP kinase subfamily. In terms of assembly, interacts with TGFB1I1. Interacts with CSK/c-Src, ABL1 and RET. Interacts with GABARAP, MAP1LC3B and GABARAPL1; controls, in a kinase-dependent fashion, both basal and starvation-induced autophagy. Interacts with ESRRA; promotes re-localization of ESRRA to the cytoplasm through a XPO1-dependent mechanism then inhibits ESRRA transcriptional activity. Interacts with PCNA; the interaction is chromatin binding- and kinase activity-dependent and prevents MDM2-mediated PCNA destruction by inhibiting the association of PCNA with MDM2. Interacts with DVL2. Interacts with CLIC3; MAPK15 does not phosphorylates CLIC3. Autophosphorylated on Thr-176 and Tyr-178; activates the enzyme. In terms of processing, ubiquitinated. Ubiquitination may allow its tight kinase activity regulation and rapid turnover. May be ubiquitinated by a SCF E3 ligase. As to expression, expressed at all stages of oocyte meiotic maturation.

It is found in the cytoplasm. The protein resides in the cytoskeleton. The protein localises to the cilium basal body. It localises to the cell junction. Its subcellular location is the tight junction. It is found in the microtubule organizing center. The protein resides in the centrosome. The protein localises to the centriole. It localises to the cytoplasmic vesicle. Its subcellular location is the autophagosome. It is found in the golgi apparatus. The protein resides in the nucleus. The protein localises to the spindle. It carries out the reaction L-seryl-[protein] + ATP = O-phospho-L-seryl-[protein] + ADP + H(+). The catalysed reaction is L-threonyl-[protein] + ATP = O-phospho-L-threonyl-[protein] + ADP + H(+). Activated by threonine and tyrosine phosphorylation. Inhibited by dual specificity phosphatases, such as DUSP1. Phosphorylation and activation in response to DNA damaging agents, serum stimulation. Constitutively activated when phosphorylated on Tyr-178. Activity depends on the relative rates of MAPK15 autophosphorylation and dephosphorylation by PTPN1. In terms of biological role, atypical MAPK protein that regulates several process such as autophagy, ciliogenesis, protein trafficking/secretion and genome integrity, in a kinase activity-dependent manner. Controls both, basal and starvation-induced autophagy throught its interaction with GABARAP, MAP1LC3B and GABARAPL1 leading to autophagosome formation, SQSTM1 degradation and reduced MAP1LC3B inhibitory phosphorylation. Regulates primary cilium formation and the localization of ciliary proteins involved in cilium structure, transport, and signaling. Prevents the relocation of the sugar-adding enzymes from the Golgi to the endoplasmic reticulum, thereby restricting the production of sugar-coated proteins. Upon amino-acid starvation, mediates transitional endoplasmic reticulum site disassembly and inhibition of secretion. Binds to chromatin leading to MAPK15 activation and interaction with PCNA, that which protects genomic integrity by inhibiting MDM2-mediated degradation of PCNA. Regulates DA transporter (DAT) activity and protein expression via activation of RhoA. In response to H(2)O(2) treatment phosphorylates ELAVL1, thus preventing it from binding to the PDCD4 3'UTR and rendering the PDCD4 mRNA accessible to miR-21 and leading to its degradation and loss of protein expression. Also functions in a kinase activity-independent manner as a negative regulator of growth. Phosphorylates in vitro FOS and MBP. During oocyte maturation, plays a key role in the microtubule organization and meiotic cell cycle progression in oocytes, fertilized eggs, and early embryos. Interacts with ESRRA promoting its re-localization from the nucleus to the cytoplasm and then prevents its transcriptional activity. This Mus musculus (Mouse) protein is Mitogen-activated protein kinase 15.